The sequence spans 401 residues: S-adenosylmethionine synthase (401 aa).

137-142 contacts ATP; it reads GQGSGD.

This sequence belongs to the AdoMet synthase 2 family. Mg(2+) is required as a cofactor.

It carries out the reaction L-methionine + ATP + H2O = S-adenosyl-L-methionine + phosphate + diphosphate. It participates in amino-acid biosynthesis; S-adenosyl-L-methionine biosynthesis; S-adenosyl-L-methionine from L-methionine: step 1/1. Its function is as follows. Catalyzes the formation of S-adenosylmethionine from methionine and ATP. In Haloquadratum walsbyi (strain DSM 16790 / HBSQ001), this protein is S-adenosylmethionine synthase.